Here is a 306-residue protein sequence, read N- to C-terminus: tRNA dimethylallyltransferase 2 (306 aa).

An ATP-binding site is contributed by 19-26; the sequence is GATASGKT. Residue 21–26 participates in substrate binding; sequence TASGKT. The segment at 44 to 47 is interaction with substrate tRNA; the sequence is DSRQ.

This sequence belongs to the IPP transferase family. In terms of assembly, monomer. Mg(2+) serves as cofactor.

The catalysed reaction is adenosine(37) in tRNA + dimethylallyl diphosphate = N(6)-dimethylallyladenosine(37) in tRNA + diphosphate. Its function is as follows. Catalyzes the transfer of a dimethylallyl group onto the adenine at position 37 in tRNAs that read codons beginning with uridine, leading to the formation of N6-(dimethylallyl)adenosine (i(6)A). The chain is tRNA dimethylallyltransferase 2 from Citrifermentans bemidjiense (strain ATCC BAA-1014 / DSM 16622 / JCM 12645 / Bem) (Geobacter bemidjiensis).